A 312-amino-acid chain; its full sequence is Cytoplasmic dynein intermediate light chain DYN3 (312 aa).

The protein belongs to the dynein light intermediate chain DYN3 family. In terms of assembly, the dynein complex consists of at least two heavy chains and a number of intermediate and light chains. Interacts with DYN1.

It is found in the cytoplasm. The protein localises to the cytoskeleton. Its function is as follows. Component of the cytoplasmic dynein which acts as a motor for the intracellular retrograde motility of vesicles and organelles along microtubules. May play an important role in the proper orientation of the mitotic spindle into the budding daughter cell yeast. Probably required for normal progression of the cell cycle. The sequence is that of Cytoplasmic dynein intermediate light chain DYN3 (DYN3) from Saccharomyces cerevisiae (strain ATCC 204508 / S288c) (Baker's yeast).